The chain runs to 333 residues: Probable cytosolic iron-sulfur protein assembly protein CIAO1 homolog (333 aa).

WD repeat units lie at residues 22–61 (APYD…KWGL), 67–106 (GHEK…LEFT), 113–152 (GHTY…DFEC), 158–197 (GHGQ…WECI), 202–241 (GHES…EKWI), 249–288 (ENSR…TPDK), and 298–333 (AHDS…LQDK).

It belongs to the WD repeat CIA1 family.

Essential component of the cytosolic iron-sulfur (Fe/S) protein assembly machinery. Required for the maturation of extramitochondrial Fe/S proteins. The protein is Probable cytosolic iron-sulfur protein assembly protein CIAO1 homolog (ciao1) of Dictyostelium discoideum (Social amoeba).